The primary structure comprises 780 residues: ATP-dependent DNA helicase RecG (780 aa).

Domain stretches follow at residues 1–350, 351–549, and 550–780; these read MLCS…GGIP, KKIE…EMPP, and GRKE…IEVG. The tract at residues 154 to 252 is wedge domain; sequence RKIFKLNDLL…VTPKEGEYVR (99 aa). ATP contacts are provided by Phe-367, Leu-369, Gly-399, Ser-400, Gly-401, Lys-402, Thr-403, and Arg-436. In terms of domain architecture, Helicase ATP-binding spans 383-544; it reads DMISEKPMNR…FYGDLDVTVI (162 aa). The short motif at 497 to 500 is the DEAH box element; the sequence is DEQH. The Helicase C-terminal domain occupies 563-728; the sequence is RVNEVYEFVR…EYDLKTRGPG (166 aa).

This sequence belongs to the helicase family. RecG subfamily. As to quaternary structure, monomer.

The enzyme catalyses Couples ATP hydrolysis with the unwinding of duplex DNA by translocating in the 3'-5' direction.. The catalysed reaction is ATP + H2O = ADP + phosphate + H(+). Functionally, plays a critical role in recombination and DNA repair. Helps process Holliday junction intermediates to mature products by catalyzing branch migration. Has replication fork (Y-DNA) regression activity, unwinds stalled or blocked replication forks to make a HJ that can be resolved. Has a DNA unwinding activity characteristic of a DNA helicase with 3'-5' polarity. Might be a DNA translocase rather than a bona fide helicase. In Thermotoga maritima (strain ATCC 43589 / DSM 3109 / JCM 10099 / NBRC 100826 / MSB8), this protein is ATP-dependent DNA helicase RecG.